We begin with the raw amino-acid sequence, 321 residues long: Histidine N-alpha-methyltransferase (321 aa).

An L-histidine-binding site is contributed by Y56. Residues G86, K92, D113, and D141–F142 contribute to the S-adenosyl-L-methionine site. L-histidine contacts are provided by residues N166, Y206, and E282–S284.

This sequence belongs to the methyltransferase superfamily. EgtD family. As to quaternary structure, monomer.

The catalysed reaction is L-histidine + 3 S-adenosyl-L-methionine = hercynine + 3 S-adenosyl-L-homocysteine + 3 H(+). The protein operates within amino-acid biosynthesis; ergothioneine biosynthesis. Functionally, catalyzes the SAM-dependent triple methylation of the alpha-amino group of histidine to form hercynine, a step in the biosynthesis pathway of ergothioneine (ERG). ERG is one of the major redox buffers which protects bacteria against redox stressors and antibiotics; loss of ERG or mycothiol (MSH, the other major redox buffer in this bacteria) leads to respiratory alterations and bioenergetic deficiencies that negatively impact virulence. This Mycobacterium tuberculosis (strain CDC 1551 / Oshkosh) protein is Histidine N-alpha-methyltransferase (egtD).